The following is a 95-amino-acid chain: Fatty acid-binding protein, liver (95 aa).

An N6-succinyllysine mark is found at Lys-13 and Lys-18. Ser-21 is modified (phosphoserine). Lys-28 is subject to N6-succinyllysine. Phosphothreonine is present on Thr-33. Ser-38 is subject to Phosphoserine. N6-succinyllysine is present on residues Lys-39, Lys-47, and Lys-59. Ser-69 is subject to Phosphoserine. At Lys-90 the chain carries N6-succinyllysine.

This sequence belongs to the calycin superfamily. Fatty-acid binding protein (FABP) family. Monomer.

It localises to the cytoplasm. In terms of biological role, this protein binds free fatty acids and their coenzyme A derivatives, bilirubin, and some other small molecules in the cytoplasm; it may be involved in intracellular lipid transport. The sequence is that of Fatty acid-binding protein, liver (FABP1) from Chaetophractus villosus (South American armadillo).